The following is a 584-amino-acid chain: Membrane protein insertase YidC (584 aa).

Transmembrane regions (helical) follow at residues 5 to 25 (SVIG…FMAP), 358 to 378 (FIGN…LVTY), 428 to 448 (LGGC…FYVF), 478 to 498 (IPLY…AVFL), and 516 to 536 (IYIF…GLGL). Residues 563-584 (ALSPVVAAPPKAPKKKKNARKR) are disordered. The span at 574 to 584 (APKKKKNARKR) shows a compositional bias: basic residues.

This sequence belongs to the OXA1/ALB3/YidC family. Type 1 subfamily. Interacts with the Sec translocase complex via SecD. Specifically interacts with transmembrane segments of nascent integral membrane proteins during membrane integration.

Its subcellular location is the cell inner membrane. In terms of biological role, required for the insertion and/or proper folding and/or complex formation of integral membrane proteins into the membrane. Involved in integration of membrane proteins that insert both dependently and independently of the Sec translocase complex, as well as at least some lipoproteins. Aids folding of multispanning membrane proteins. This Prosthecochloris aestuarii (strain DSM 271 / SK 413) protein is Membrane protein insertase YidC.